A 172-amino-acid polypeptide reads, in one-letter code: MNSPAIVIIIFSTLTFSEAWVNDWDGALNFQCQLKDSIKTISSIHSNHHEDRRWNFGCERTLRDPSCYFTNYVNDWDKLLHFTCKSGEAIAGFNSYHDNRREDRRWKIYCCKDKNKCTDYRTCAWTGYVNSWDGDLHYTVPKDYVLTGVISEHDNHREDRRWKFQHCRLKNC.

An N-terminal signal peptide occupies residues 1–19 (MNSPAIVIIIFSTLTFSEA). 4 consecutive repeat copies span residues 21–25 (VNDWD), 50–54 (EDRRW), 73–77 (VNDWD), and 102–106 (EDRRW). Intrachain disulfides connect Cys-32–Cys-58, Cys-67–Cys-172, Cys-84–Cys-110, Cys-111–Cys-117, and Cys-123–Cys-167. Tandem repeats lie at residues 129-133 (VNSWD) and 158-162 (EDRRW).

This sequence belongs to the dermatopontin family.

The protein resides in the secreted. Functionally, possesses the property of inducing both aggregation of amebocytes and agglutination of erythrocytes. This is Hemagglutinin/amebocyte aggregation factor from Limulus polyphemus (Atlantic horseshoe crab).